The following is a 638-amino-acid chain: Threonine--tRNA ligase (638 aa).

The 61-residue stretch at 1–61 (MPNIKLPDGS…ERDSELAILT (61 aa)) folds into the TGS domain. The tract at residues 242-533 (DHRKLGRQLD…LIEHYAGAMP (292 aa)) is catalytic. Positions 333, 384, and 510 each coordinate Zn(2+).

The protein belongs to the class-II aminoacyl-tRNA synthetase family. As to quaternary structure, homodimer. The cofactor is Zn(2+).

The protein localises to the cytoplasm. The catalysed reaction is tRNA(Thr) + L-threonine + ATP = L-threonyl-tRNA(Thr) + AMP + diphosphate + H(+). In terms of biological role, catalyzes the attachment of threonine to tRNA(Thr) in a two-step reaction: L-threonine is first activated by ATP to form Thr-AMP and then transferred to the acceptor end of tRNA(Thr). Also edits incorrectly charged L-seryl-tRNA(Thr). In Azoarcus sp. (strain BH72), this protein is Threonine--tRNA ligase.